A 412-amino-acid polypeptide reads, in one-letter code: Dihydrolipoyllysine-residue acetyltransferase component of pyruvate dehydrogenase complex (412 aa).

The Lipoyl-binding domain occupies 2 to 78 (PIKILMPALS…PVNSLIAVLS (77 aa)). Lysine 43 is modified (N6-lipoyllysine). The Peripheral subunit-binding (PSBD) domain occupies 132 to 169 (FASPLAKRLAKMRNIRFESVKGSGPHGRIVKQDILSYT). Residue histidine 385 is part of the active site.

This sequence belongs to the 2-oxoacid dehydrogenase family. As to quaternary structure, forms a 24-polypeptide structural core with octahedral symmetry. The cofactor is (R)-lipoate.

It carries out the reaction N(6)-[(R)-dihydrolipoyl]-L-lysyl-[protein] + acetyl-CoA = N(6)-[(R)-S(8)-acetyldihydrolipoyl]-L-lysyl-[protein] + CoA. Its function is as follows. The pyruvate dehydrogenase complex catalyzes the overall conversion of pyruvate to acetyl-CoA and CO(2). It contains multiple copies of three enzymatic components: pyruvate dehydrogenase (E1), dihydrolipoamide acetyltransferase (E2) and lipoamide dehydrogenase (E3). The sequence is that of Dihydrolipoyllysine-residue acetyltransferase component of pyruvate dehydrogenase complex (pdhC) from Rickettsia conorii (strain ATCC VR-613 / Malish 7).